The sequence spans 104 residues: Vacuolar ATPase assembly integral membrane protein VMA21 (104 aa).

Over 1–21 (MSNRVSTGKMAMAPQESVQPA) the chain is Cytoplasmic. A helical transmembrane segment spans residues 22-42 (VLYKLVLFALLMAVVPIGTYF). Topologically, residues 43-65 (STLNYLWDGASRCGFPSGLCSTT) are lumenal. A helical transmembrane segment spans residues 66–86 (FAAISAIAAANLILVGYVVVA). Topologically, residues 87–104 (FREDAASRTGPLPEKKTS) are cytoplasmic. The Prevents secretion from ER signature appears at 101–104 (KKTS).

The protein belongs to the VMA21 family.

It localises to the endoplasmic reticulum membrane. The protein localises to the endoplasmic reticulum-Golgi intermediate compartment membrane. It is found in the cytoplasmic vesicle. Its subcellular location is the COPII-coated vesicle membrane. Required for the assembly of the V0 complex of the vacuolar ATPase (V-ATPase) in the endoplasmic reticulum. This Cryptococcus neoformans var. neoformans serotype D (strain B-3501A) (Filobasidiella neoformans) protein is Vacuolar ATPase assembly integral membrane protein VMA21.